The sequence spans 85 residues: Putative N.vectensis toxin 1 9 (85 aa).

A signal peptide spans 1 to 20 (MASFKIVIVCLALLVAVASA). Positions 21–36 (RRRDMMSDDELDYHFS) are excised as a propeptide. 3 cysteine pairs are disulfide-bonded: C42–C82, C44–C72, and C65–C83.

The protein belongs to the sea anemone sodium channel inhibitory toxin family. Type II subfamily. As to expression, expressed in ectodermal glands and in clumps outside of the extodermal layer. Is not expressed in nematocytes. In adult female tissues, shows similar expression levels in mesenteries (gametes-producing tissue), tentacles, pharynx and physa.

It is found in the secreted. In terms of biological role, binds to site 3 of voltage-gated sodium channels and inhibits the inactivation process. Is highly active on DmNav1/TipE (drosophila) and is only extremely weakly active on rat Nav1.4-beta-1/SCN4A-SCN1B, and on human Nav1.5-beta-1/SCN5A-beta-1. This reveals high specificity for arthropod over mammalian channels. In vivo, when released into the medium, this recombinant toxin induces impaired swimming, paralysis and death of the crustacean A.nauplii within several hours. Also causes paralysis of cherry shrimps immediately after injection at very low doses. Its effect on zebrafish (D.rerio) larvae is also rapid, since it induces tail twitching accompanied by impaired swimming after 20 minutes and complete paralysis within 45 minutes. It has also been observed to cause death of zebrafish larvae within 1 hour. In Nematostella vectensis (Starlet sea anemone), this protein is Putative N.vectensis toxin 1 9.